Here is a 299-residue protein sequence, read N- to C-terminus: Nucleotide-binding protein AFE_3021 (299 aa).

11 to 18 contacts ATP; it reads GLSGSGKS. Position 62-65 (62-65) interacts with GTP; sequence DVRN.

It belongs to the RapZ-like family.

Displays ATPase and GTPase activities. This chain is Nucleotide-binding protein AFE_3021, found in Acidithiobacillus ferrooxidans (strain ATCC 23270 / DSM 14882 / CIP 104768 / NCIMB 8455) (Ferrobacillus ferrooxidans (strain ATCC 23270)).